We begin with the raw amino-acid sequence, 227 residues long: Cytochrome c oxidase subunit 2 (227 aa).

Over 1–14 (MAHAAQVGLQDATS) the chain is Mitochondrial intermembrane. Residues 15-45 (PIMEELITFHDHALMIIFLICFLVLYALFLT) traverse the membrane as a helical segment. Residues 46–59 (LTTKLTNTNISDAQ) are Mitochondrial matrix-facing. A helical transmembrane segment spans residues 60–87 (EMETVWTILPAIILVLIALPSLRILYMT). Topologically, residues 88-227 (DEVNDPSLTI…IFEMGPVFTL (140 aa)) are mitochondrial intermembrane. Residues His-161, Cys-196, Glu-198, Cys-200, His-204, and Met-207 each coordinate Cu cation. Glu-198 is a binding site for Mg(2+).

Belongs to the cytochrome c oxidase subunit 2 family. In terms of assembly, component of the cytochrome c oxidase (complex IV, CIV), a multisubunit enzyme composed of 14 subunits. The complex is composed of a catalytic core of 3 subunits MT-CO1, MT-CO2 and MT-CO3, encoded in the mitochondrial DNA, and 11 supernumerary subunits COX4I1 (or COX4I2), COX5A, COX5B, COX6A1 (or COX6A2), COX6B1 (or COX6B2), COX6C, COX7A2 (or COX7A1), COX7B, COX7C, COX8A and NDUFA4, which are encoded in the nuclear genome. The complex exists as a monomer or a dimer and forms supercomplexes (SCs) in the inner mitochondrial membrane with NADH-ubiquinone oxidoreductase (complex I, CI) and ubiquinol-cytochrome c oxidoreductase (cytochrome b-c1 complex, complex III, CIII), resulting in different assemblies (supercomplex SCI(1)III(2)IV(1) and megacomplex MCI(2)III(2)IV(2)). Found in a complex with TMEM177, COA6, COX18, COX20, SCO1 and SCO2. Interacts with TMEM177 in a COX20-dependent manner. Interacts with COX20. Interacts with COX16. It depends on Cu cation as a cofactor.

The protein resides in the mitochondrion inner membrane. It carries out the reaction 4 Fe(II)-[cytochrome c] + O2 + 8 H(+)(in) = 4 Fe(III)-[cytochrome c] + 2 H2O + 4 H(+)(out). Functionally, component of the cytochrome c oxidase, the last enzyme in the mitochondrial electron transport chain which drives oxidative phosphorylation. The respiratory chain contains 3 multisubunit complexes succinate dehydrogenase (complex II, CII), ubiquinol-cytochrome c oxidoreductase (cytochrome b-c1 complex, complex III, CIII) and cytochrome c oxidase (complex IV, CIV), that cooperate to transfer electrons derived from NADH and succinate to molecular oxygen, creating an electrochemical gradient over the inner membrane that drives transmembrane transport and the ATP synthase. Cytochrome c oxidase is the component of the respiratory chain that catalyzes the reduction of oxygen to water. Electrons originating from reduced cytochrome c in the intermembrane space (IMS) are transferred via the dinuclear copper A center (CU(A)) of subunit 2 and heme A of subunit 1 to the active site in subunit 1, a binuclear center (BNC) formed by heme A3 and copper B (CU(B)). The BNC reduces molecular oxygen to 2 water molecules using 4 electrons from cytochrome c in the IMS and 4 protons from the mitochondrial matrix. The sequence is that of Cytochrome c oxidase subunit 2 (MT-CO2) from Homo sapiens (Human).